The following is a 346-amino-acid chain: Probable RNA methyltransferase PSPA7_3453 (346 aa).

Residue Glu91 is the Proton acceptor of the active site. A Radical SAM core domain is found at 94–320 (LLPRGGLCVS…TKVRNSAGQD (227 aa)). A disulfide bond links Cys101 and Cys325. Residues Cys108, Cys112, and Cys115 each contribute to the [4Fe-4S] cluster site. S-adenosyl-L-methionine contacts are provided by residues 153 to 154 (GE), Ser183, 206 to 208 (SLH), and Asn282. Cys325 functions as the S-methylcysteine intermediate in the catalytic mechanism.

Belongs to the radical SAM superfamily. RlmN family. It depends on [4Fe-4S] cluster as a cofactor.

It is found in the cytoplasm. The chain is Probable RNA methyltransferase PSPA7_3453 from Pseudomonas paraeruginosa (strain DSM 24068 / PA7) (Pseudomonas aeruginosa (strain PA7)).